The chain runs to 305 residues: Glutaminase (305 aa).

Residues Ser61, Asn113, Glu158, Asn165, Tyr189, Tyr241, and Val259 each contribute to the substrate site.

The protein belongs to the glutaminase family. In terms of assembly, homotetramer.

The catalysed reaction is L-glutamine + H2O = L-glutamate + NH4(+). This Alkaliphilus oremlandii (strain OhILAs) (Clostridium oremlandii (strain OhILAs)) protein is Glutaminase.